We begin with the raw amino-acid sequence, 275 residues long: uncharacterized protein (275 aa).

Aspartate 45 contributes to the NADPH binding site. Residues tyrosine 50 and histidine 111 each act as proton donor in the active site. 7 residues coordinate NADPH: serine 139, glutamine 162, leucine 191, lysine 196, serine 232, serine 233, and arginine 237.

It belongs to the aldo/keto reductase family.

The protein localises to the cytoplasm. The protein resides in the nucleus. This is an uncharacterized protein from Schizosaccharomyces pombe (strain 972 / ATCC 24843) (Fission yeast).